The sequence spans 697 residues: Gametogenetin-binding protein 2 (697 aa).

Serine 360 is subject to Phosphoserine.

In terms of assembly, interacts with GGN. In terms of tissue distribution, expressed in heart, brain, placenta, lung, liver, skeletal muscle, kidney and pancreas. Expressed more abundantly in heart, pancreas and skeletal muscle.

It is found in the cytoplasmic vesicle. May be involved in spermatogenesis. The protein is Gametogenetin-binding protein 2 (GGNBP2) of Homo sapiens (Human).